The chain runs to 214 residues: Transmembrane emp24 domain-containing protein p24beta3 (214 aa).

Residues 1–27 (MERRQAKIHVFVLIGLILLNSINQISS) form the signal peptide. The Lumenal portion of the chain corresponds to 28–178 (LSVTVNDEEC…RHTNESTRKR (151 aa)). In terms of domain architecture, GOLD spans 35–122 (EECVQEYVLY…PETVSFYIHV (88 aa)). The stretch at 140-158 (VNVKIAELREALESVVAEQ) forms a coiled coil. Residues R164 and R169 each carry the omega-N-methylated arginine modification. The N-linked (GlcNAc...) asparagine glycan is linked to N172. A helical transmembrane segment spans residues 179-199 (VIFYTVGEYIFLAAASGLQVL). The Cytoplasmic segment spans residues 200–214 (YIRKLFSKSVAYNRV). The COPII vesicle coat-binding motif lies at 204-205 (LF). Residues 204–214 (LFSKSVAYNRV) carry the COPI vesicle coat-binding motif. Residues 213–214 (RV) carry the Required for the export from the endoplasmic reticulum to the Golgi motif.

This sequence belongs to the EMP24/GP25L family. As to quaternary structure, probably oligomerizes with other members of the EMP24/GP25L family. Associates with the COPI vesicle coat (coatomer). Associates with the COPII vesicle coat (coatomer).

It localises to the golgi apparatus. The protein resides in the cis-Golgi network membrane. Its subcellular location is the golgi stack membrane. In terms of biological role, involved in vesicular protein trafficking. Mainly functions in the early secretory pathway but also in post-Golgi membranes. Thought to act as cargo receptor at the lumenal side for incorporation of secretory cargo molecules into transport vesicles and to be involved in vesicle coat formation at the cytoplasmic side. This is Transmembrane emp24 domain-containing protein p24beta3 from Arabidopsis thaliana (Mouse-ear cress).